We begin with the raw amino-acid sequence, 203 residues long: MAEGPLEAPFWRKGLLVAGLDEAGRGAWAGPIVVGAVVLPPGEYPFRDSKLLSPKARERLAEKVKEVALAFALGVAEAAEVDRLGVLKATLLAAERALLSLPLAPEALVTDYLPLPTPLPLLSPPKADEKSPTVAAASILAKVHRDRIMDELDRLYPGYGFARHKGYGTQEHQEALLALGPSPVHRKRFAPVAQAPLRFPEAP.

The region spanning 15–201 (LLVAGLDEAG…VAQAPLRFPE (187 aa)) is the RNase H type-2 domain. 3 residues coordinate a divalent metal cation: Asp-21, Glu-22, and Asp-111.

Belongs to the RNase HII family. It depends on Mn(2+) as a cofactor. The cofactor is Mg(2+).

Its subcellular location is the cytoplasm. The enzyme catalyses Endonucleolytic cleavage to 5'-phosphomonoester.. Functionally, endonuclease that specifically degrades the RNA of RNA-DNA hybrids. The polypeptide is Ribonuclease HII (Thermus thermophilus (strain ATCC 27634 / DSM 579 / HB8)).